We begin with the raw amino-acid sequence, 1044 residues long: MGVALTRSAQWTAAGHGAKTLEVTPLNEAIVKEIIMFVESFIYKYPQEANYVFVEPLEWKTNLDPSAFGSGYAVSGTTVKSEEADKNGEPLLYLSVPQIKIRSFGQLSRMLYIAKNMKLKEAQACIEANRNPVAKILGLDYNIISEKIGNSFVSNILDKITKDDDSESEIKMKIALQLKQLDLHLLNHSLKHISLEIRLNPGTVKNDIELLKQFSGKGKQTVLESIEYTSDYEFSNGCRAPPWRQIKGEICYVLVKPHDAETLCVTCSKEGVFLNGGKTDDEGQINYERKGEIYKDLVTLLKEKSAIFSENMSKQEIKFSEQPQKDQPNEAPKEEVAITHKASVTSRKSTQEKNRINLGRSQLTKRLEPSLNWRTSVSSKDRNTLRDTQVEKHGGKLEKSRSSVSPGRAQLIRKSVEKIEEIISDSSSESEEDEEQPDHRQEANADLPSEYWQIQKLVKYLKGGNQTATVIALCSMKDFNLAQETCQLAIRDVGGLEVLINLLETDEVKCKIGSLKILKEISHNPQIRRNIVDLGGLPVMVNILDSPHKSLKCLAAETIANVAKFRRARRVVRRHGGITKLVALLDCGKHSGEPAQSSLYETRDVEVARCGALALWSCSKSYANKEAIRKAGGIPLLARLLKTSHENMLIPVVGTLQECASEENYRAAIKAERIIENLVKNLNSENEQLQEHCAMAIYQCAEDEETRDLVRLHGGLKPLASLLNNTDNKERLAAVTGAIWKCSISKENVTKFREYKAIETLVGLLTDQPEEVLVNVVGALGECCQEHENRVIIRRCGGIQPLVNLLVGINQALLVNVTKAVGACAVEPESMMIIDRLDGVRLLWSLLKNPHPDVKASAAWALCPCIQNAKDAGEMVRSFVGGLELVVNLLKSDNKEVLASVCAVITNIAKDQENLAVITDHGVVPLLSKLANTNNDKLRRHLAETISRCCMWGRNRVAFGEHKAVAPLVRYLKSNDTNVHRATAQALYQLSEDADNCVTMHENGAVKLLLDMVGSPDEELQEAAAGCISNIRRLALAIEKARYS.

2 stretches are compositionally biased toward basic and acidic residues: residues 317 to 338 (IKFSEQPQKDQPNEAPKEEVAI) and 379 to 401 (SKDRNTLRDTQVEKHGGKLEKSR). Disordered stretches follow at residues 317-409 (IKFS…PGRA) and 423-446 (ISDSSSESEEDEEQPDHRQEANAD). HEAT repeat units lie at residues 448–485 (PSEYWQIQKLVKYLKGGNQTATVIALCSMKDFNLAQET), 487–527 (QLAI…NPQI), 530–568 (NIVDLGGLPVMVNILDSPHKSLKCLAAETIANVAKFRRA), 627–665 (AIRKAGGIPLLARLLKTSHENMLIPVVGTLQECASEENY), and 668–706 (AIKAERIIENLVKNLNSENEQLQEHCAMAIYQCAEDEET). ARM repeat units lie at residues 484–523 (ETCQLAIRDVGGLEVLINLLETDEVKCKIGSLKILKEISH), 525–564 (PQIRRNIVDLGGLPVMVNILDSPHKSLKCLAAETIANVAK), 535–577 (GGLP…RHGG), 622–661 (YANKEAIRKAGGIPLLARLLKTSHENMLIPVVGTLQECAS), 663–702 (ENYRAAIKAERIIENLVKNLNSENEQLQEHCAMAIYQCAE), 746–785 (KENVTKFREYKAIETLVGLLTDQPEEVLVNVVGALGECCQ), 828–867 (PESMMIIDRLDGVRLLWSLLKNPHPDVKASAAWALCPCIQ), 871–910 (DAGEMVRSFVGGLELVVNLLKSDNKEVLASVCAVITNIAK), 912–951 (QENLAVITDHGVVPLLSKLANTNNDKLRRHLAETISRCCM), 953–992 (GRNRVAFGEHKAVAPLVRYLKSNDTNVHRATAQALYQLSE), and 1004–1031 (GAVKLLLDMVGSPDEELQEAAAGCISNI). HEAT repeat units lie at residues 831 to 870 (MMIIDRLDGVRLLWSLLKNPHPDVKASAAWALCPCIQNAK), 874 to 914 (EMVR…DQEN), 916 to 955 (AVITDHGVVPLLSKLANTNNDKLRRHLAETISRCCMWGRN), 958 to 996 (AFGEHKAVAPLVRYLKSNDTNVHRATAQALYQLSEDADN), and 999 to 1037 (TMHENGAVKLLLDMVGSPDEELQEAAAGCISNIRRLALA).

Component of the outer dynein arm-docking complex along with ODAD1, ODAD3, ODAD4 and CLXN. Interacts with CFAP61. In terms of tissue distribution, expressed in trachea multiciliated cells.

It is found in the cytoplasm. Its subcellular location is the cytoskeleton. The protein resides in the cilium axoneme. It localises to the cilium basal body. Functionally, component of the outer dynein arm-docking complex (ODA-DC) that mediates outer dynein arms (ODA) binding onto the doublet microtubule. Involved in mediating assembly of both ODAs and their axonemal docking complex onto ciliary microtubules. This Bos taurus (Bovine) protein is Outer dynein arm-docking complex subunit 2 (ODAD2).